A 394-amino-acid polypeptide reads, in one-letter code: DNA primase large subunit PriL (394 aa).

Cysteine 231, cysteine 340, cysteine 351, and cysteine 357 together coordinate [4Fe-4S] cluster.

It belongs to the eukaryotic-type primase large subunit family. In terms of assembly, heterodimer of a small subunit (PriS) and a large subunit (PriL). [4Fe-4S] cluster serves as cofactor.

Functionally, regulatory subunit of DNA primase, an RNA polymerase that catalyzes the synthesis of short RNA molecules used as primers for DNA polymerase during DNA replication. Stabilizes and modulates the activity of the small subunit, increasing the rate of DNA synthesis, and conferring RNA synthesis capability. The DNA polymerase activity may enable DNA primase to also catalyze primer extension after primer synthesis. May also play a role in DNA repair. The polypeptide is DNA primase large subunit PriL (Pyrococcus horikoshii (strain ATCC 700860 / DSM 12428 / JCM 9974 / NBRC 100139 / OT-3)).